We begin with the raw amino-acid sequence, 658 residues long: Aspartate--tRNA ligase, mitochondrial (658 aa).

An L-aspartate-binding site is contributed by E198. The aspartate stretch occupies residues 226–229 (QQYK). Residue R248 participates in L-aspartate binding. Residues 248 to 250 (RDE) and E553 each bind ATP. R560 contributes to the L-aspartate binding site. 604-607 (GFDR) contributes to the ATP binding site.

It belongs to the class-II aminoacyl-tRNA synthetase family. Type 1 subfamily.

It is found in the mitochondrion matrix. It catalyses the reaction tRNA(Asp) + L-aspartate + ATP = L-aspartyl-tRNA(Asp) + AMP + diphosphate. In terms of biological role, catalyzes the attachment of aspartate to tRNA(Asp) in the mitochondrion. This Saccharomyces cerevisiae (strain ATCC 204508 / S288c) (Baker's yeast) protein is Aspartate--tRNA ligase, mitochondrial (MSD1).